Here is a 302-residue protein sequence, read N- to C-terminus: Meiotic recombination protein rec14 (302 aa).

WD repeat units follow at residues alanine 14 to valine 51, proline 57 to leucine 96, glutamine 101 to glutamate 140, aspartate 142 to serine 184, glycine 185 to arginine 226, glycine 227 to threonine 266, and glutamate 269 to glutamate 302.

In terms of assembly, component of the DSB catalytic core (DSBC) complex, composed of at least rec12, rec6 and rec14. The complex interacts with mde2.

Its function is as follows. Required for formation of the rec12-mediated double-strand breaks (DSBs) that initiate meiotic recombination. This is Meiotic recombination protein rec14 from Schizosaccharomyces pombe (strain 972 / ATCC 24843) (Fission yeast).